A 1334-amino-acid chain; its full sequence is Aldehyde oxidase 3 (1334 aa).

Residues 8-95 form the 2Fe-2S ferredoxin-type domain; that stretch reads DELIFFVNGK…GAAVTTVEGI (88 aa). The [2Fe-2S] cluster site is built by C47, C52, C55, and C77. Q116 is a Mo-molybdopterin binding site. [2Fe-2S] cluster is bound by residues C117, C120, C152, and C154. The 186-residue stretch at 236–421 folds into the FAD-binding PCMH-type domain; the sequence is FRGERTTWIA…ISVFVPLSRK (186 aa). Residue 264–271 participates in FAD binding; it reads LVIGNTCL. S320 is subject to Phosphoserine. Residues S354, H358, D367, and L411 each contribute to the FAD site. Positions 801, 1042, and 1198 each coordinate Mo-molybdopterin. E1265 serves as the catalytic Proton acceptor; for azaheterocycle hydroxylase activity.

The protein belongs to the xanthine dehydrogenase family. Homodimer. [2Fe-2S] cluster is required as a cofactor. It depends on FAD as a cofactor. Mo-molybdopterin serves as cofactor.

Its subcellular location is the cytoplasm. It catalyses the reaction an aldehyde + O2 + H2O = a carboxylate + H2O2 + H(+). Its function is as follows. Oxidase with broad substrate specificity, oxidizing aromatic azaheterocycles, such as N1-methylnicotinamide and phthalazine, as well as aldehydes, such as benzaldehyde, retinal and pyridoxal. Plays a key role in the metabolism of xenobiotics and drugs containing aromatic azaheterocyclic substituents. Is probably involved in the regulation of reactive oxygen species homeostasis. Is a prominent source of superoxide generation via the one-electron reduction of molecular oxygen. Also catalyzes nitric oxide (NO) production; under anaerobic conditions, reduces nitrite to NO with NADH or aldehyde as electron donor, but under aerobic conditions, NADH is the preferred substrate. These reactions may be catalyzed by several isozymes. This Rattus norvegicus (Rat) protein is Aldehyde oxidase 3 (Aox3).